A 277-amino-acid polypeptide reads, in one-letter code: NADPH-dependent 7-cyano-7-deazaguanine reductase (277 aa).

Substrate is bound at residue 86-88; the sequence is IES. 88–89 contributes to the NADPH binding site; sequence SK. Cys-185 functions as the Thioimide intermediate in the catalytic mechanism. The active-site Proton donor is the Asp-192. Position 224–225 (224–225) interacts with substrate; that stretch reads HE. 253–254 lines the NADPH pocket; the sequence is RG.

Belongs to the GTP cyclohydrolase I family. QueF type 2 subfamily. Homodimer.

Its subcellular location is the cytoplasm. The catalysed reaction is 7-aminomethyl-7-carbaguanine + 2 NADP(+) = 7-cyano-7-deazaguanine + 2 NADPH + 3 H(+). Its pathway is tRNA modification; tRNA-queuosine biosynthesis. Functionally, catalyzes the NADPH-dependent reduction of 7-cyano-7-deazaguanine (preQ0) to 7-aminomethyl-7-deazaguanine (preQ1). In Hydrogenovibrio crunogenus (strain DSM 25203 / XCL-2) (Thiomicrospira crunogena), this protein is NADPH-dependent 7-cyano-7-deazaguanine reductase.